A 57-amino-acid chain; its full sequence is Plasma membrane proteolipid 3 (57 aa).

Residues 34 to 54 (INILLTILGYLPGIVHALYII) traverse the membrane as a helical segment.

It belongs to the UPF0057 (PMP3) family.

The protein resides in the cell membrane. In terms of biological role, plays a role in the regulation of membrane potential. Could mediate a proton leak. This is Plasma membrane proteolipid 3 (pmp-1) from Neurospora crassa (strain ATCC 24698 / 74-OR23-1A / CBS 708.71 / DSM 1257 / FGSC 987).